A 310-amino-acid chain; its full sequence is Ribosomal RNA small subunit methyltransferase H (310 aa).

S-adenosyl-L-methionine is bound by residues 33–35 (AGH), aspartate 53, phenylalanine 79, aspartate 100, and glutamine 107.

Belongs to the methyltransferase superfamily. RsmH family.

Its subcellular location is the cytoplasm. The enzyme catalyses cytidine(1402) in 16S rRNA + S-adenosyl-L-methionine = N(4)-methylcytidine(1402) in 16S rRNA + S-adenosyl-L-homocysteine + H(+). Its function is as follows. Specifically methylates the N4 position of cytidine in position 1402 (C1402) of 16S rRNA. The polypeptide is Ribosomal RNA small subunit methyltransferase H (Clostridium beijerinckii (strain ATCC 51743 / NCIMB 8052) (Clostridium acetobutylicum)).